We begin with the raw amino-acid sequence, 193 residues long: Putative nucleotidase YqfW (193 aa).

It belongs to the 5'(3')-deoxyribonucleotidase family.

The chain is Putative nucleotidase YqfW (yqfW) from Bacillus subtilis (strain 168).